An 80-amino-acid chain; its full sequence is U19-lycotoxin-Ls1a (80 aa).

The N-terminal stretch at 1-22 (MSPKVQALIFIVGLITLLAAHA) is a signal peptide. Residues 23–34 (QEELSDNIESER) constitute a propeptide that is removed on maturation. 4 cysteine pairs are disulfide-bonded: Cys-36–Cys-50, Cys-43–Cys-55, Cys-49–Cys-66, and Cys-57–Cys-64.

It belongs to the neurotoxin 02 (plectoxin) family. 05 (U19-lycotoxin) subfamily. As to expression, expressed by the venom gland.

It is found in the secreted. In Lycosa singoriensis (Wolf spider), this protein is U19-lycotoxin-Ls1a.